The chain runs to 368 residues: Outer membrane protein assembly factor BamC (368 aa).

The first 18 residues, 1–18 (MTTKFFIGTAIAVSVLSA), serve as a signal peptide directing secretion. C19 carries N-palmitoyl cysteine lipidation. C19 is lipidated: S-diacylglycerol cysteine.

It belongs to the BamC family. In terms of assembly, part of the Bam complex.

It localises to the cell outer membrane. Part of the outer membrane protein assembly complex, which is involved in assembly and insertion of beta-barrel proteins into the outer membrane. This chain is Outer membrane protein assembly factor BamC, found in Pseudoalteromonas atlantica (strain T6c / ATCC BAA-1087).